The sequence spans 345 residues: Uroporphyrinogen decarboxylase (345 aa).

Residues 27–31 (RQAGR), Phe46, Asp76, Tyr152, Ser207, and His321 each bind substrate.

This sequence belongs to the uroporphyrinogen decarboxylase family. As to quaternary structure, homodimer.

Its subcellular location is the cytoplasm. It catalyses the reaction uroporphyrinogen III + 4 H(+) = coproporphyrinogen III + 4 CO2. It participates in porphyrin-containing compound metabolism; protoporphyrin-IX biosynthesis; coproporphyrinogen-III from 5-aminolevulinate: step 4/4. Its function is as follows. Catalyzes the decarboxylation of four acetate groups of uroporphyrinogen-III to yield coproporphyrinogen-III. This is Uroporphyrinogen decarboxylase from Staphylococcus aureus (strain bovine RF122 / ET3-1).